The primary structure comprises 275 residues: MSVGYDRLKTSSLAELRAAIRSGAYRSHTAGLGQGYLQANLAILPEAYALDFMRYCQRNPKPCPLIGVSDTGNPMMFTLGRDIDIRTDVPAYNVYRDGRLDSVSADITEDWRDDLVVFALGCSFTFEHAVMRAGVALWHVDNDRTVPMFRSNIETVPAGPFSGKMVVSMRAVPEDRVAEVAEISRAYPLAHGAPVYWGDPAGLGIADIMSPDWGDPAPLGPGEVPMFWACGVTPQVAIEAARLPLCITHKPGHMLITDVAEDAEVPVVETAQDKR.

This sequence belongs to the D-glutamate cyclase family.

This is Putative hydro-lyase SPO1111 from Ruegeria pomeroyi (strain ATCC 700808 / DSM 15171 / DSS-3) (Silicibacter pomeroyi).